Here is a 484-residue protein sequence, read N- to C-terminus: tRNA sulfurtransferase (484 aa).

The 105-residue stretch at 63–167 (REMIERLTCT…LDRLFVIHRQ (105 aa)) folds into the THUMP domain. ATP-binding positions include 185–186 (LM), Lys-267, Gly-289, and Gln-298. Cysteines 346 and 457 form a disulfide. Positions 405 to 483 (VLPGQIVIDI…GHTNVRVYRP (79 aa)) constitute a Rhodanese domain. The Cysteine persulfide intermediate role is filled by Cys-457.

It belongs to the ThiI family.

It is found in the cytoplasm. The catalysed reaction is [ThiI sulfur-carrier protein]-S-sulfanyl-L-cysteine + a uridine in tRNA + 2 reduced [2Fe-2S]-[ferredoxin] + ATP + H(+) = [ThiI sulfur-carrier protein]-L-cysteine + a 4-thiouridine in tRNA + 2 oxidized [2Fe-2S]-[ferredoxin] + AMP + diphosphate. The enzyme catalyses [ThiS sulfur-carrier protein]-C-terminal Gly-Gly-AMP + S-sulfanyl-L-cysteinyl-[cysteine desulfurase] + AH2 = [ThiS sulfur-carrier protein]-C-terminal-Gly-aminoethanethioate + L-cysteinyl-[cysteine desulfurase] + A + AMP + 2 H(+). Its pathway is cofactor biosynthesis; thiamine diphosphate biosynthesis. Catalyzes the ATP-dependent transfer of a sulfur to tRNA to produce 4-thiouridine in position 8 of tRNAs, which functions as a near-UV photosensor. Also catalyzes the transfer of sulfur to the sulfur carrier protein ThiS, forming ThiS-thiocarboxylate. This is a step in the synthesis of thiazole, in the thiamine biosynthesis pathway. The sulfur is donated as persulfide by IscS. The polypeptide is tRNA sulfurtransferase (Pseudomonas aeruginosa (strain UCBPP-PA14)).